Consider the following 391-residue polypeptide: NAD(P)H-quinone oxidoreductase subunit H, chloroplastic (391 aa).

The protein belongs to the complex I 49 kDa subunit family. As to quaternary structure, NDH is composed of at least 16 different subunits, 5 of which are encoded in the nucleus.

It localises to the plastid. The protein resides in the chloroplast thylakoid membrane. It carries out the reaction a plastoquinone + NADH + (n+1) H(+)(in) = a plastoquinol + NAD(+) + n H(+)(out). The enzyme catalyses a plastoquinone + NADPH + (n+1) H(+)(in) = a plastoquinol + NADP(+) + n H(+)(out). Its function is as follows. NDH shuttles electrons from NAD(P)H:plastoquinone, via FMN and iron-sulfur (Fe-S) centers, to quinones in the photosynthetic chain and possibly in a chloroplast respiratory chain. The immediate electron acceptor for the enzyme in this species is believed to be plastoquinone. Couples the redox reaction to proton translocation, and thus conserves the redox energy in a proton gradient. This is NAD(P)H-quinone oxidoreductase subunit H, chloroplastic from Mesostigma viride (Green alga).